The sequence spans 263 residues: Putative TATA-binding protein pB263R (263 aa).

This sequence belongs to the asfivirus B263R family.

In terms of biological role, putative TATA-binding protein. In African swine fever virus (isolate Tick/Malawi/Lil 20-1/1983) (ASFV), this protein is Putative TATA-binding protein pB263R.